We begin with the raw amino-acid sequence, 326 residues long: MAFTPFPPRQPTASARLPLTLMTLDDWALATITGADSEKYMQGQVTADVSQMTENQHLLAAHCDAKGKMWSNLRLFRDGDGFAWIERRSVREPQLTELKKYAVFSKVTIAPDDERVLLGVAGFQARAALANLFSELPSREKQVVKEGATTLLWFEHPAERFLIVTDEATANMLTDKLRGEAELNNSQQWLALNIEAGFPVIDAANSGQFIPQATNLQALGGISFKKGCYTGQEMVARAKFRGANKRALWLLAGSASRLPEAGEDLELKMGENWRRTGTVLAAVKLEDGQVVVQVVMNNDMEPDSIFRVRDDANTLHIEPLPYSLEE.

Trp-27 and Trp-189 together coordinate folate.

The protein belongs to the tRNA-modifying YgfZ family.

The protein resides in the cytoplasm. Its function is as follows. Folate-binding protein involved in regulating the level of ATP-DnaA and in the modification of some tRNAs. It is probably a key factor in regulatory networks that act via tRNA modification, such as initiation of chromosomal replication. The chain is tRNA-modifying protein YgfZ from Shigella boydii serotype 18 (strain CDC 3083-94 / BS512).